The primary structure comprises 302 residues: MPQDQHLGVDKAKILIEALPYIQRFSGKTLVVKYGGNAMTDPELESSFARDIVLLKTVGLNPIVVHGGGPQVDSFLKQLGRESDRIDGMRVTDEATMEVVEMVLGGSVNKSIVNLINKHGGRAIGLTGQDGNLLRARKLLMEKQEEDGSIKHIDLGMVGEVTGVKTDVLEMFTQSDFIPVIAPLGVDEKGNTYNINADLVAGKVAEALGAEKLILLTNISGVLDENKNLLTGLTTQEVDRLIETGVIYGGMIPKVGCALDAVKGGVVSAHIVDGRVPHATLLEIFTDHGVGTLISNRTQTTH.

Substrate is bound by residues 68-69 (GG), Arg90, and Asn194.

This sequence belongs to the acetylglutamate kinase family. ArgB subfamily.

Its subcellular location is the cytoplasm. The catalysed reaction is N-acetyl-L-glutamate + ATP = N-acetyl-L-glutamyl 5-phosphate + ADP. It functions in the pathway amino-acid biosynthesis; L-arginine biosynthesis; N(2)-acetyl-L-ornithine from L-glutamate: step 2/4. Catalyzes the ATP-dependent phosphorylation of N-acetyl-L-glutamate. The polypeptide is Acetylglutamate kinase (Acinetobacter baumannii (strain AB307-0294)).